Reading from the N-terminus, the 91-residue chain is Large ribosomal subunit protein uL23 (91 aa).

The protein belongs to the universal ribosomal protein uL23 family. In terms of assembly, part of the 50S ribosomal subunit. Contacts protein L29, and trigger factor when it is bound to the ribosome.

In terms of biological role, one of the early assembly proteins it binds 23S rRNA. One of the proteins that surrounds the polypeptide exit tunnel on the outside of the ribosome. Forms the main docking site for trigger factor binding to the ribosome. The polypeptide is Large ribosomal subunit protein uL23 (Staphylococcus aureus (strain USA300)).